The chain runs to 299 residues: ATP phosphoribosyltransferase (299 aa).

The protein belongs to the ATP phosphoribosyltransferase family. Long subfamily. Equilibrium between an active dimeric form, an inactive hexameric form and higher aggregates. Interconversion between the various forms is largely reversible and is influenced by the natural substrates and inhibitors of the enzyme. Mg(2+) is required as a cofactor.

The protein localises to the cytoplasm. The catalysed reaction is 1-(5-phospho-beta-D-ribosyl)-ATP + diphosphate = 5-phospho-alpha-D-ribose 1-diphosphate + ATP. Its pathway is amino-acid biosynthesis; L-histidine biosynthesis; L-histidine from 5-phospho-alpha-D-ribose 1-diphosphate: step 1/9. With respect to regulation, feedback inhibited by histidine. Functionally, catalyzes the condensation of ATP and 5-phosphoribose 1-diphosphate to form N'-(5'-phosphoribosyl)-ATP (PR-ATP). Has a crucial role in the pathway because the rate of histidine biosynthesis seems to be controlled primarily by regulation of HisG enzymatic activity. This chain is ATP phosphoribosyltransferase, found in Shigella flexneri serotype 5b (strain 8401).